Here is a 1120-residue protein sequence, read N- to C-terminus: Isoleucine--tRNA ligase (1120 aa).

The 'HIGH' region signature appears at 64-74 (PFANGLPHYGH). A 'KMSKS' region motif is present at residues 647–651 (KLSKR). ATP is bound at residue lysine 650.

Belongs to the class-I aminoacyl-tRNA synthetase family. IleS type 2 subfamily. As to quaternary structure, monomer. Requires Zn(2+) as cofactor.

The protein resides in the cytoplasm. The enzyme catalyses tRNA(Ile) + L-isoleucine + ATP = L-isoleucyl-tRNA(Ile) + AMP + diphosphate. Its function is as follows. Catalyzes the attachment of isoleucine to tRNA(Ile). As IleRS can inadvertently accommodate and process structurally similar amino acids such as valine, to avoid such errors it has two additional distinct tRNA(Ile)-dependent editing activities. One activity is designated as 'pretransfer' editing and involves the hydrolysis of activated Val-AMP. The other activity is designated 'posttransfer' editing and involves deacylation of mischarged Val-tRNA(Ile). This chain is Isoleucine--tRNA ligase, found in Ehrlichia canis (strain Jake).